The sequence spans 428 residues: Adenylosuccinate synthetase (428 aa).

Residues 12 to 18 (GDEGKGK) and 40 to 42 (GHT) each bind GTP. Asp13 acts as the Proton acceptor in catalysis. 2 residues coordinate Mg(2+): Asp13 and Gly40. Residues 13 to 16 (DEGK), 38 to 41 (NAGH), Thr128, Arg142, Gln223, Thr238, and Arg302 contribute to the IMP site. His41 serves as the catalytic Proton donor. 298 to 304 (TTTGRPR) contacts substrate. GTP-binding positions include Arg304, 330–332 (SID), and 412–414 (SVG).

This sequence belongs to the adenylosuccinate synthetase family. As to quaternary structure, homodimer. Mg(2+) serves as cofactor.

It is found in the cytoplasm. It catalyses the reaction IMP + L-aspartate + GTP = N(6)-(1,2-dicarboxyethyl)-AMP + GDP + phosphate + 2 H(+). Its pathway is purine metabolism; AMP biosynthesis via de novo pathway; AMP from IMP: step 1/2. Its function is as follows. Plays an important role in the de novo pathway of purine nucleotide biosynthesis. Catalyzes the first committed step in the biosynthesis of AMP from IMP. The polypeptide is Adenylosuccinate synthetase (Geobacillus kaustophilus (strain HTA426)).